A 330-amino-acid polypeptide reads, in one-letter code: Phosphate acyltransferase (330 aa).

The protein belongs to the PlsX family. In terms of assembly, homodimer. Probably interacts with PlsY.

It localises to the cytoplasm. It catalyses the reaction a fatty acyl-[ACP] + phosphate = an acyl phosphate + holo-[ACP]. Its pathway is lipid metabolism; phospholipid metabolism. Functionally, catalyzes the reversible formation of acyl-phosphate (acyl-PO(4)) from acyl-[acyl-carrier-protein] (acyl-ACP). This enzyme utilizes acyl-ACP as fatty acyl donor, but not acyl-CoA. This Streptococcus agalactiae serotype III (strain NEM316) protein is Phosphate acyltransferase.